A 195-amino-acid chain; its full sequence is Probable molybdenum cofactor guanylyltransferase (195 aa).

Residues 9–11, Lys21, Asp69, and Asp100 each bind GTP; that span reads LAG. Position 100 (Asp100) interacts with Mg(2+).

Belongs to the MobA family. Requires Mg(2+) as cofactor.

Its subcellular location is the cytoplasm. It catalyses the reaction Mo-molybdopterin + GTP + H(+) = Mo-molybdopterin guanine dinucleotide + diphosphate. In terms of biological role, transfers a GMP moiety from GTP to Mo-molybdopterin (Mo-MPT) cofactor (Moco or molybdenum cofactor) to form Mo-molybdopterin guanine dinucleotide (Mo-MGD) cofactor. This Geobacillus sp. (strain WCH70) protein is Probable molybdenum cofactor guanylyltransferase.